The following is a 338-amino-acid chain: Fructose-bisphosphate aldolase (338 aa).

The substrate site is built by Arg-50 and Lys-138. The active-site Proton acceptor is Glu-179. The active-site Schiff-base intermediate with dihydroxyacetone-P is Lys-221.

This sequence belongs to the class I fructose-bisphosphate aldolase family.

The enzyme catalyses beta-D-fructose 1,6-bisphosphate = D-glyceraldehyde 3-phosphate + dihydroxyacetone phosphate. It participates in carbohydrate degradation; glycolysis; D-glyceraldehyde 3-phosphate and glycerone phosphate from D-glucose: step 4/4. The sequence is that of Fructose-bisphosphate aldolase from Encephalitozoon cuniculi (strain GB-M1) (Microsporidian parasite).